We begin with the raw amino-acid sequence, 77 residues long: Small ribosomal subunit protein uS17 (77 aa).

It belongs to the universal ribosomal protein uS17 family. In terms of assembly, part of the 30S ribosomal subunit.

In terms of biological role, one of the primary rRNA binding proteins, it binds specifically to the 5'-end of 16S ribosomal RNA. The chain is Small ribosomal subunit protein uS17 from Rickettsia rickettsii (strain Sheila Smith).